The primary structure comprises 511 residues: Bifunctional purine biosynthesis protein PurH (511 aa).

Residues Met1 to Thr147 enclose the MGS-like domain.

The protein belongs to the PurH family.

The enzyme catalyses (6R)-10-formyltetrahydrofolate + 5-amino-1-(5-phospho-beta-D-ribosyl)imidazole-4-carboxamide = 5-formamido-1-(5-phospho-D-ribosyl)imidazole-4-carboxamide + (6S)-5,6,7,8-tetrahydrofolate. The catalysed reaction is IMP + H2O = 5-formamido-1-(5-phospho-D-ribosyl)imidazole-4-carboxamide. It functions in the pathway purine metabolism; IMP biosynthesis via de novo pathway; 5-formamido-1-(5-phospho-D-ribosyl)imidazole-4-carboxamide from 5-amino-1-(5-phospho-D-ribosyl)imidazole-4-carboxamide (10-formyl THF route): step 1/1. It participates in purine metabolism; IMP biosynthesis via de novo pathway; IMP from 5-formamido-1-(5-phospho-D-ribosyl)imidazole-4-carboxamide: step 1/1. This chain is Bifunctional purine biosynthesis protein PurH, found in Leptospira interrogans serogroup Icterohaemorrhagiae serovar Lai (strain 56601).